The primary structure comprises 124 residues: Large ribosomal subunit protein eL22 (124 aa).

The protein belongs to the eukaryotic ribosomal protein eL22 family. As to quaternary structure, component of the large ribosomal subunit. Mature ribosomes consist of a small (40S) and a large (60S) subunit. The 40S subunit contains about 32 different proteins and 1 molecule of RNA (18S). The 60S subunit contains 45 different proteins and 3 molecules of RNA (25S, 5.8S and 5S).

It is found in the cytoplasm. Component of the ribosome, a large ribonucleoprotein complex responsible for the synthesis of proteins in the cell. The small ribosomal subunit (SSU) binds messenger RNAs (mRNAs) and translates the encoded message by selecting cognate aminoacyl-transfer RNA (tRNA) molecules. The large subunit (LSU) contains the ribosomal catalytic site termed the peptidyl transferase center (PTC), which catalyzes the formation of peptide bonds, thereby polymerizing the amino acids delivered by tRNAs into a polypeptide chain. The nascent polypeptides leave the ribosome through a tunnel in the LSU and interact with protein factors that function in enzymatic processing, targeting, and the membrane insertion of nascent chains at the exit of the ribosomal tunnel. This is Large ribosomal subunit protein eL22 from Candida albicans (strain SC5314 / ATCC MYA-2876) (Yeast).